A 542-amino-acid polypeptide reads, in one-letter code: MATNYIFVTGGVVSSLGKGIAAASLAAILEARGLKVTMLKLDPYINVDPGTMSPTQHGEVFVTQDGAETDLDLGHYERFIRTKMTKRNNFTTGKIYSEVLRKERRGDYLGATIQVIPHITNEIKSRVIDGAAGHDVAIVEVGGTVGDIESLPFLEALRQLAVQVGRERTLFMHLTLVPYIPTAGEVKTKPTQHSVKELLSIGIQPDVLICRSDRMVPPNERAKIALFCNVPERAVISLKDVSSIYQIPALLKSQGLDDFICQRFHLDCPEADLSEWEQVLYQEANPTGEVVIGMVGKYTELPDAYKSVNEALKHAGLKNRLSVQIKYIDSQDVETKGTEVLEGVDGILVPGGFGNRGVEGKILTAKYARENHIPYLGICLGMQVAYIEYARNVAGLTDANSTEFDRTCDYPVVGLITEWQDAEGNIETRTDASDLGGTMRLGAQQCHLMEGSKARELYGAETIEERHRHRYEVNNVLRPQVEKAGLKVTGLSADKKLVEIIEVPNHPWFVACQFHPEFTSTPRDGHPLFAGFVKAAKDNQKK.

The interval 1 to 266 (MATNYIFVTG…DDFICQRFHL (266 aa)) is amidoligase domain. Serine 14 contacts CTP. Serine 14 contributes to the UTP binding site. Residues 15–20 (SLGKGI) and aspartate 72 contribute to the ATP site. The Mg(2+) site is built by aspartate 72 and glutamate 140. CTP is bound by residues 147–149 (DIE), 187–192 (KTKPTQ), and lysine 223. UTP is bound by residues 187-192 (KTKPTQ) and lysine 223. 239-241 (KDV) provides a ligand contact to ATP. Residues 291–542 (VIGMVGKYTE…VKAAKDNQKK (252 aa)) enclose the Glutamine amidotransferase type-1 domain. L-glutamine is bound at residue glycine 352. The active-site Nucleophile; for glutamine hydrolysis is the cysteine 379. Residues 380–383 (LGMQ), glutamate 403, and arginine 470 each bind L-glutamine. Catalysis depends on residues histidine 515 and glutamate 517.

The protein belongs to the CTP synthase family. As to quaternary structure, homotetramer.

The catalysed reaction is UTP + L-glutamine + ATP + H2O = CTP + L-glutamate + ADP + phosphate + 2 H(+). The enzyme catalyses L-glutamine + H2O = L-glutamate + NH4(+). It catalyses the reaction UTP + NH4(+) + ATP = CTP + ADP + phosphate + 2 H(+). It participates in pyrimidine metabolism; CTP biosynthesis via de novo pathway; CTP from UDP: step 2/2. Its activity is regulated as follows. Allosterically activated by GTP, when glutamine is the substrate; GTP has no effect on the reaction when ammonia is the substrate. The allosteric effector GTP functions by stabilizing the protein conformation that binds the tetrahedral intermediate(s) formed during glutamine hydrolysis. Inhibited by the product CTP, via allosteric rather than competitive inhibition. Catalyzes the ATP-dependent amination of UTP to CTP with either L-glutamine or ammonia as the source of nitrogen. Regulates intracellular CTP levels through interactions with the four ribonucleotide triphosphates. The protein is CTP synthase of Pasteurella multocida (strain Pm70).